The sequence spans 383 residues: Interleukin-13 receptor subunit alpha-2 (383 aa).

An N-terminal signal peptide occupies residues 1-21; it reads MAFVHIRCLCFILLCTITGYS. At 22–334 the chain is on the extracellular side; it reads LEIKVNPPQD…WEGYTGPDSK (313 aa). Fibronectin type-III domains follow at residues 28 to 128, 131 to 219, and 234 to 332; these read PPQD…SDEG, ETKI…PIRS, and PPEF…TGPD. A disulfide bridge links Cys-59 with Cys-107. Asn-109 is a glycosylation site (N-linked (GlcNAc...) asparagine). Cysteines 139 and 149 form a disulfide. The N-linked (GlcNAc...) asparagine glycan is linked to Asn-162. Cys-178 and Cys-191 are joined by a disulfide. N-linked (GlcNAc...) asparagine glycans are attached at residues Asn-209 and Asn-293. Cys-263 and Cys-310 are oxidised to a cystine. The short motif at 316–320 is the WSXWS motif element; sequence WSEWS. Residues 335-355 traverse the membrane as a helical segment; it reads IIFIVPVCLFFIFLLLLLCLI. The Cytoplasmic portion of the chain corresponds to 356-383; the sequence is VEKEEPEPTLSLHVDLNKEVCAYEDTLC.

This sequence belongs to the type I cytokine receptor family. Type 5 subfamily. In terms of assembly, interacts with IL4RA. Interacts with high affinity to interleukin-13 (IL13), but not to interleukin-4 (IL4). Post-translationally, cleaved by MMP8 leading to a soluble form that is also able to interact with IL13.

It is found in the cell membrane. Its subcellular location is the secreted. Its function is as follows. Cell surface receptor that plays a role in the regulation of IL-13-mediated responses. Functions as a decoy receptor that inhibits IL-13- and IL-4-mediated signal transduction via the JAK-STAT pathway and thereby modulates immune responses and inflammation. Serves as a functional signaling receptor for IL-13 in an alternative pathway involving AP-1 ultimately leading to the production of TGFB1. The sequence is that of Interleukin-13 receptor subunit alpha-2 (Il13ra2) from Mus musculus (Mouse).